Reading from the N-terminus, the 67-residue chain is Conotoxin reg3.8 (67 aa).

An N-terminal signal peptide occupies residues 1 to 22 (MMSKLGVLLTICLLLFPLSVLP). Residues 23–50 (LDGDQLADQPARHAQSAERNARFHPVKR) constitute a propeptide that is removed on maturation. 3 disulfides stabilise this stretch: cysteine 51-cysteine 65, cysteine 52-cysteine 63, and cysteine 57-cysteine 66. Cysteine amide is present on cysteine 66.

It belongs to the conotoxin M superfamily. As to expression, expressed by the venom duct.

Its subcellular location is the secreted. The polypeptide is Conotoxin reg3.8 (Conus regius (Crown cone)).